The primary structure comprises 159 residues: 2-C-methyl-D-erythritol 2,4-cyclodiphosphate synthase (159 aa).

Positions 10 and 12 each coordinate a divalent metal cation. 4-CDP-2-C-methyl-D-erythritol 2-phosphate is bound by residues aspartate 10–histidine 12 and histidine 36–serine 37. Histidine 44 serves as a coordination point for a divalent metal cation. 4-CDP-2-C-methyl-D-erythritol 2-phosphate contacts are provided by residues aspartate 58 to glycine 60, phenylalanine 63 to aspartate 67, alanine 102 to alanine 108, threonine 134 to glutamate 137, phenylalanine 141, phenylalanine 141 to arginine 144, and arginine 144.

Belongs to the IspF family. In terms of assembly, homotrimer. A divalent metal cation serves as cofactor.

The catalysed reaction is 4-CDP-2-C-methyl-D-erythritol 2-phosphate = 2-C-methyl-D-erythritol 2,4-cyclic diphosphate + CMP. It functions in the pathway isoprenoid biosynthesis; isopentenyl diphosphate biosynthesis via DXP pathway; isopentenyl diphosphate from 1-deoxy-D-xylulose 5-phosphate: step 4/6. Involved in the biosynthesis of isopentenyl diphosphate (IPP) and dimethylallyl diphosphate (DMAPP), two major building blocks of isoprenoid compounds. Catalyzes the conversion of 4-diphosphocytidyl-2-C-methyl-D-erythritol 2-phosphate (CDP-ME2P) to 2-C-methyl-D-erythritol 2,4-cyclodiphosphate (ME-CPP) with a corresponding release of cytidine 5-monophosphate (CMP). The protein is 2-C-methyl-D-erythritol 2,4-cyclodiphosphate synthase of Shewanella oneidensis (strain ATCC 700550 / JCM 31522 / CIP 106686 / LMG 19005 / NCIMB 14063 / MR-1).